The chain runs to 448 residues: Noelin-2 (448 aa).

Positions 1-14 (MRKLRQTGTTIAGG) are cleaved as a signal peptide. Coiled-coil stretches lie at residues 52–79 (RDGR…LELR) and 130–187 (LEQY…AQKL). Residues Asn-68, Asn-149, Asn-269, Asn-304, Asn-393, and Asn-435 are each glycosylated (N-linked (GlcNAc...) asparagine). One can recognise an Olfactomedin-like domain in the interval 188–440 (GCGKLTGVSN…QVLYNVTLFH (253 aa)). Residues Cys-189 and Cys-371 are joined by a disulfide bond.

As to quaternary structure, peripherally associated with AMPAR complex. AMPAR complex consists of an inner core made of 4 pore-forming GluA/GRIA proteins (GRIA1, GRIA2, GRIA3 and GRIA4) and 4 major auxiliary subunits arranged in a twofold symmetry. One of the two pairs of distinct binding sites is occupied either by CNIH2, CNIH3 or CACNG2, CACNG3. The other harbors CACNG2, CACNG3, CACNG4, CACNG8 or GSG1L. This inner core of AMPAR complex is complemented by outer core constituents binding directly to the GluA/GRIA proteins at sites distinct from the interaction sites of the inner core constituents. Outer core constituents include at least PRRT1, PRRT2, CKAMP44/SHISA9, FRRS1L and NRN1. The proteins of the inner and outer core serve as a platform for other, more peripherally associated AMPAR constituents, including OLFM2. Alone or in combination, these auxiliary subunits control the gating and pharmacology of the AMPAR complex and profoundly impact their biogenesis and protein processing. Interacts with GRIA2. Interacts with OLFM1 and OLFM3. Interacts with SRF; the interaction promotes dissociation of SRF from the transcriptional repressor HEY2. Interacts with RUNX2. As to expression, expressed in the brain (at protein level). In the developing eye, first detected at 12 dpc in the retinal pigmented epithelium and preferentially expressed in differentiating retinal ganglion cells between 15 and 18 dpc. In the brain, expression is detected mainly in the olfactory bulb, cortex, piriform cortex, olfactory trabeculae, and inferior and superior colliculus. In the adult eye, expression is detected mainly in retinal ganglion cells. Expressed in carotid arteries.

It is found in the secreted. It localises to the synapse. The protein resides in the membrane. The protein localises to the nucleus. Its subcellular location is the cytoplasm. Functionally, involved in transforming growth factor beta (TGF-beta)-induced smooth muscle differentiation. TGF-beta induces expression and nuclear translocation of OLFM2 where it binds to SRF, causing its dissociation from the transcriptional repressor HEY2/HERP1 and facilitating binding of SRF to target genes. Plays a role in AMPAR complex organization. Is a regulator of vascular smooth-muscle cell (SMC) phenotypic switching, that acts by promoting RUNX2 and inhibiting MYOCD binding to SRF. SMC phenotypic switching is the process through which vascular SMCs undergo transition between a quiescent contractile phenotype and a proliferative synthetic phenotype in response to pathological stimuli. SMC phenotypic plasticity is essential for vascular development and remodeling. The sequence is that of Noelin-2 (Olfm2) from Mus musculus (Mouse).